A 99-amino-acid polypeptide reads, in one-letter code: Small integral membrane protein 14 (99 aa).

Residues 1–49 (MAEGGFDPCECVCSHEHAMRRLINLLRQSQSYCTDTECLQELPGPSGDN) lie on the Lumenal side of the membrane. Residues 50-70 (GISVTMILVAWMVIALILFLL) form a helical membrane-spanning segment. The Cytoplasmic portion of the chain corresponds to 71 to 99 (RPPNLRGSNLPGKPTSPHNGQDPPAPPVD). Residues 77–99 (GSNLPGKPTSPHNGQDPPAPPVD) form a disordered region.

It is found in the endoplasmic reticulum membrane. In Pongo abelii (Sumatran orangutan), this protein is Small integral membrane protein 14 (SMIM14).